The primary structure comprises 106 residues: Large ribosomal subunit protein uL24 (106 aa).

This sequence belongs to the universal ribosomal protein uL24 family. Part of the 50S ribosomal subunit.

Functionally, one of two assembly initiator proteins, it binds directly to the 5'-end of the 23S rRNA, where it nucleates assembly of the 50S subunit. Its function is as follows. One of the proteins that surrounds the polypeptide exit tunnel on the outside of the subunit. This chain is Large ribosomal subunit protein uL24, found in Acinetobacter baylyi (strain ATCC 33305 / BD413 / ADP1).